A 225-amino-acid polypeptide reads, in one-letter code: Myelin-associated neurite-outgrowth inhibitor (225 aa).

The Cytoplasmic segment spans residues 1-58 (MNPVYSPGSSGVPYANAKGIGYPAGFPMGYAAAAPAYSPNMYAGPNPAFQQELEHPAH). A helical membrane pass occupies residues 59-75 (VSSGVQMFMFGHAFSVA). Over 76 to 173 (RNGAIPSGYT…PAPIQSPRGN (98 aa)) the chain is Extracellular. The chain crosses the membrane as a helical span at residues 174–193 (GVAMGMVAGTTMAMSAGTLL). Over 194 to 225 (TSHYPSPVAPQVTMPTYRPPGTPTYSYVPPQW) the chain is Cytoplasmic.

The protein belongs to the FAM168 family.

It localises to the cytoplasm. It is found in the perinuclear region. The protein resides in the cell membrane. The protein localises to the cell projection. Its subcellular location is the axon. Functionally, inhibitor of neuronal axonal outgrowth. This Xenopus laevis (African clawed frog) protein is Myelin-associated neurite-outgrowth inhibitor (fam168b).